A 607-amino-acid chain; its full sequence is MVWFKMMSAIEWAEKYRPRTLEDVVGNKKAVRDFRAWAEEWQSRIPETRAVILYGPAGIGKTSSAHALARDMDWDVIELNASDQRTAGVIEKIAGSAASMNTLFGSKRLIILDEADNIHGTADRGGMRAISGIIKGTLQPIVLIANDIYGLTPTIRNLCLEIKFGSVQSRSMVPALKKVCGAEGVYCSQEALLQIAENAGGDFRSAINDLQAAASGKEKLEVEDIGTAGRDVKENIFKAMQKIFKSTDCKKALESAYGLDESPEDLVHWIDENLPIQYARKDGNLEDIKTGFGYLSKADLYLGRVKKRQNYRMWRYASMLMVCGAALSKTKPYPGFIKYQQPSLWRRLGQTRSKRDMRDNIASKIGEHSFESMHYSRNNLLGLYSRMLKDEESAVEVTANLGLELEELMYLTGSAKASKKLQKIYDKAQKLLEEGKNETADPDFFKAPVPAVDNKQRTLSCPVIIQEEEEKPQKEGSAGKSDPPGPHSSERKQKTLNMGFDSLLETSEKKENSEKKENSGYLLVDDPKPAEKNLFSFSPSLLEKKNFSESVEQKTSSKPSKKGNPANNEPSKQKILDKVTPTESVQDNAGDGAKKAEPKNQKTLFDF.

55-62 contributes to the ATP binding site; that stretch reads GPAGIGKT. The segment at 468–607 is disordered; that stretch reads EEEKPQKEGS…PKNQKTLFDF (140 aa). The span at 506–518 shows a compositional bias: basic and acidic residues; the sequence is TSEKKENSEKKEN. A compositionally biased stretch (polar residues) spans 548–558; sequence SESVEQKTSSK.

The protein belongs to the activator 1 small subunits family. RfcL subfamily. In terms of assembly, heteromultimer composed of small subunits (RfcS) and large subunits (RfcL).

Its function is as follows. Part of the RFC clamp loader complex which loads the PCNA sliding clamp onto DNA. This chain is Replication factor C large subunit, found in Methanosarcina acetivorans (strain ATCC 35395 / DSM 2834 / JCM 12185 / C2A).